A 479-amino-acid polypeptide reads, in one-letter code: Aspartyl/glutamyl-tRNA(Asn/Gln) amidotransferase subunit B (479 aa).

This sequence belongs to the GatB/GatE family. GatB subfamily. In terms of assembly, heterotrimer of A, B and C subunits.

It carries out the reaction L-glutamyl-tRNA(Gln) + L-glutamine + ATP + H2O = L-glutaminyl-tRNA(Gln) + L-glutamate + ADP + phosphate + H(+). The catalysed reaction is L-aspartyl-tRNA(Asn) + L-glutamine + ATP + H2O = L-asparaginyl-tRNA(Asn) + L-glutamate + ADP + phosphate + 2 H(+). Allows the formation of correctly charged Asn-tRNA(Asn) or Gln-tRNA(Gln) through the transamidation of misacylated Asp-tRNA(Asn) or Glu-tRNA(Gln) in organisms which lack either or both of asparaginyl-tRNA or glutaminyl-tRNA synthetases. The reaction takes place in the presence of glutamine and ATP through an activated phospho-Asp-tRNA(Asn) or phospho-Glu-tRNA(Gln). The polypeptide is Aspartyl/glutamyl-tRNA(Asn/Gln) amidotransferase subunit B (Streptococcus pyogenes serotype M6 (strain ATCC BAA-946 / MGAS10394)).